Here is a 507-residue protein sequence, read N- to C-terminus: Alkyl hydroperoxide reductase subunit F (507 aa).

207–222 (DVLIVGGGPASGSAAI) provides a ligand contact to FAD. The cysteines at positions 335 and 338 are disulfide-linked. Position 347–361 (347–361 (DVAVIGGGNSGVEAA)) interacts with NAD(+). 467–477 (TNVPGIFAAGD) is a binding site for FAD.

This sequence belongs to the class-II pyridine nucleotide-disulfide oxidoreductase family. Homodimer. FAD is required as a cofactor.

Its function is as follows. Serves to protect the cell against DNA damage by alkyl hydroperoxides. It can use either NADH or NADPH as electron donor for direct reduction of redox dyes or of alkyl hydroperoxides when combined with the AhpC protein. This Staphylococcus epidermidis (strain ATCC 35984 / DSM 28319 / BCRC 17069 / CCUG 31568 / BM 3577 / RP62A) protein is Alkyl hydroperoxide reductase subunit F (ahpF).